A 451-amino-acid polypeptide reads, in one-letter code: Proline--tRNA ligase (451 aa).

Belongs to the class-II aminoacyl-tRNA synthetase family. ProS type 2 subfamily. As to quaternary structure, homodimer.

The protein localises to the cytoplasm. It carries out the reaction tRNA(Pro) + L-proline + ATP = L-prolyl-tRNA(Pro) + AMP + diphosphate. In terms of biological role, catalyzes the attachment of proline to tRNA(Pro) in a two-step reaction: proline is first activated by ATP to form Pro-AMP and then transferred to the acceptor end of tRNA(Pro). This Roseobacter denitrificans (strain ATCC 33942 / OCh 114) (Erythrobacter sp. (strain OCh 114)) protein is Proline--tRNA ligase.